We begin with the raw amino-acid sequence, 194 residues long: MRESSQIRETTETKIKLSLQLDEGKNVSVQTGVGFFDHMLTLFARHGRFGLQVEAEGDVFVDAHHTVEDVGIVLGNCLKKALQNKEGINRYGSAYVPMDESLGFVAIDISGRSYIVFQGELTNPKLGDFDTELTEEFFRAVAHTANITLHARILYGSNTHHKIEALFKAFGRALREAVERNAHITGVNSTKGML.

This sequence belongs to the imidazoleglycerol-phosphate dehydratase family.

It is found in the cytoplasm. It catalyses the reaction D-erythro-1-(imidazol-4-yl)glycerol 3-phosphate = 3-(imidazol-4-yl)-2-oxopropyl phosphate + H2O. It participates in amino-acid biosynthesis; L-histidine biosynthesis; L-histidine from 5-phospho-alpha-D-ribose 1-diphosphate: step 6/9. The sequence is that of Imidazoleglycerol-phosphate dehydratase from Bacillus cereus (strain AH820).